The following is a 174-amino-acid chain: Large ribosomal subunit protein uL10 (174 aa).

The protein belongs to the universal ribosomal protein uL10 family. As to quaternary structure, part of the ribosomal stalk of the 50S ribosomal subunit. The N-terminus interacts with L11 and the large rRNA to form the base of the stalk. The C-terminus forms an elongated spine to which L12 dimers bind in a sequential fashion forming a multimeric L10(L12)X complex.

Functionally, forms part of the ribosomal stalk, playing a central role in the interaction of the ribosome with GTP-bound translation factors. The protein is Large ribosomal subunit protein uL10 of Acidiphilium cryptum (strain JF-5).